Reading from the N-terminus, the 886-residue chain is DNA double-strand break repair Rad50 ATPase (886 aa).

Residues 32 to 38 (NGAGKSS) and Gln137 contribute to the ATP site. Coiled coils occupy residues 181-240 (IRSL…KEIK) and 320-416 (RKKE…GDLN). Positions 391–489 (IKDVSDRINQ…EREELEATRN (99 aa)) constitute a Zinc-hook domain. Zn(2+)-binding residues include Cys437 and Cys440. Coiled coils occupy residues 450–657 (AKIR…ISEL) and 682–718 (EADK…EESK).

The protein belongs to the SMC family. RAD50 subfamily. Homodimer. Forms a heterotetramer composed of two Mre11 subunits and two Rad50 subunits. Interacts with Mre11 and HerA. Zn(2+) is required as a cofactor.

Part of the Rad50/Mre11 complex, which is involved in the early steps of DNA double-strand break (DSB) repair. The complex may facilitate opening of the processed DNA ends to aid in the recruitment of HerA and NurA. Rad50 controls the balance between DNA end bridging and DNA resection via ATP-dependent structural rearrangements of the Rad50/Mre11 complex. The sequence is that of DNA double-strand break repair Rad50 ATPase from Sulfolobus acidocaldarius (strain ATCC 33909 / DSM 639 / JCM 8929 / NBRC 15157 / NCIMB 11770).